The chain runs to 516 residues: Putative fatty acyl-CoA reductase CG8306 (516 aa).

Helical transmembrane passes span 356–376 (WVFRLSAILFHFIPAIILDLV), 471–491 (ILLGLHVALQLSFWYGVFKLI), and 496–516 (GISTAKAALVLPVLYYLFGLL).

It belongs to the fatty acyl-CoA reductase family.

Its subcellular location is the membrane. The enzyme catalyses a long-chain fatty acyl-CoA + 2 NADPH + 2 H(+) = a long-chain primary fatty alcohol + 2 NADP(+) + CoA. Functionally, catalyzes the reduction of C16 or C18 fatty acyl-CoA to fatty alcohols. The sequence is that of Putative fatty acyl-CoA reductase CG8306 from Drosophila melanogaster (Fruit fly).